A 168-amino-acid chain; its full sequence is Protein yop-1 (168 aa).

At 1-35 the chain is on the cytoplasmic side; it reads MSSPQDRAQQYIGQLDKELSKYPTLNNLEKTTGVP. The helical transmembrane segment at 36-55 threads the bilayer; it reads KAYAVIGLVALYFFLIIFNL. Residue Gly-56 is a topological domain, lumenal. Residues 57 to 76 traverse the membrane as a helical segment; it reads GQLLTNLAGFVLPGYYSLNA. At 77-86 the chain is on the cytoplasmic side; it reads LFTASKQDDT. A helical membrane pass occupies residues 87-103; sequence QWLTYWVVFSLFTVIES. At 104–105 the chain is on the lumenal side; that stretch reads LI. Residues 106–124 form a helical membrane-spanning segment; sequence SVVYWFPFYFTFKFVFLLW. Residues 125–168 are Cytoplasmic-facing; that stretch reads LSLPTFKGAETIFRSFLAPTLGRYFQNGSTASGLRAKADAVHTD.

This sequence belongs to the DP1 family. As to quaternary structure, oligomer.

The protein localises to the endoplasmic reticulum membrane. It localises to the golgi apparatus membrane. Its function is as follows. Required to generate and maintain the structure of the tubular endoplasmic reticulum network and the vacuole. Induces high curvature in membranes and causes membrane tubule formation. Involved in membrane/vesicle trafficking. The chain is Protein yop-1 (yop-1) from Neurospora crassa (strain ATCC 24698 / 74-OR23-1A / CBS 708.71 / DSM 1257 / FGSC 987).